Consider the following 169-residue polypeptide: MDHGFYESNLDGEGLRIGIVQARFNEPVCDELREACMAELKKLGVEGEDTLLVTVPGALEVPLALQKMAESGQFDALVALGAVVRGETYHFELVSNESGAGITRVGLDFNVPIANGILTVDTDAQAHARTREKGRDCARAAVEMANLVVALDSLREHGAEDAEDEEDDE.

5-amino-6-(D-ribitylamino)uracil-binding positions include phenylalanine 24, 58 to 60, and 82 to 84; these read ALE and AVV. 87–88 is a binding site for (2S)-2-hydroxy-3-oxobutyl phosphate; it reads ET. Histidine 90 acts as the Proton donor in catalysis. Asparagine 115 lines the 5-amino-6-(D-ribitylamino)uracil pocket. Residue arginine 129 coordinates (2S)-2-hydroxy-3-oxobutyl phosphate.

It belongs to the DMRL synthase family.

The catalysed reaction is (2S)-2-hydroxy-3-oxobutyl phosphate + 5-amino-6-(D-ribitylamino)uracil = 6,7-dimethyl-8-(1-D-ribityl)lumazine + phosphate + 2 H2O + H(+). Its pathway is cofactor biosynthesis; riboflavin biosynthesis; riboflavin from 2-hydroxy-3-oxobutyl phosphate and 5-amino-6-(D-ribitylamino)uracil: step 1/2. Catalyzes the formation of 6,7-dimethyl-8-ribityllumazine by condensation of 5-amino-6-(D-ribitylamino)uracil with 3,4-dihydroxy-2-butanone 4-phosphate. This is the penultimate step in the biosynthesis of riboflavin. The polypeptide is 6,7-dimethyl-8-ribityllumazine synthase (Cupriavidus metallidurans (strain ATCC 43123 / DSM 2839 / NBRC 102507 / CH34) (Ralstonia metallidurans)).